Here is a 322-residue protein sequence, read N- to C-terminus: 4-diphosphocytidyl-2-C-methyl-D-erythritol kinase (322 aa).

Lys-18 is an active-site residue. 130–140 (PMGAGLGGGSS) is an ATP binding site. Asp-172 is an active-site residue.

The protein belongs to the GHMP kinase family. IspE subfamily.

It carries out the reaction 4-CDP-2-C-methyl-D-erythritol + ATP = 4-CDP-2-C-methyl-D-erythritol 2-phosphate + ADP + H(+). The protein operates within isoprenoid biosynthesis; isopentenyl diphosphate biosynthesis via DXP pathway; isopentenyl diphosphate from 1-deoxy-D-xylulose 5-phosphate: step 3/6. Its function is as follows. Catalyzes the phosphorylation of the position 2 hydroxy group of 4-diphosphocytidyl-2C-methyl-D-erythritol. The polypeptide is 4-diphosphocytidyl-2-C-methyl-D-erythritol kinase (Psychrobacter cryohalolentis (strain ATCC BAA-1226 / DSM 17306 / VKM B-2378 / K5)).